A 213-amino-acid chain; its full sequence is Pyrrolidone-carboxylate peptidase (213 aa).

Active-site residues include glutamate 78, cysteine 141, and histidine 165.

It belongs to the peptidase C15 family. In terms of assembly, homotetramer.

It localises to the cytoplasm. It catalyses the reaction Release of an N-terminal pyroglutamyl group from a polypeptide, the second amino acid generally not being Pro.. Removes 5-oxoproline from various penultimate amino acid residues except L-proline. This is Pyrrolidone-carboxylate peptidase from Enterococcus faecalis (strain ATCC 700802 / V583).